Reading from the N-terminus, the 877-residue chain is Telomere length regulation protein clk-2 (877 aa).

Over residues 488–501 the composition is skewed to polar residues; it reads NKDSAAITSKNNLR. Residues 488–509 form a disordered region; it reads NKDSAAITSKNNLRLDSDDDED.

This sequence belongs to the TEL2 family.

Its subcellular location is the nucleus. It localises to the chromosome. It is found in the telomere. Functionally, DNA damage checkpoint protein required for DNA damage-induced cell cycle arrest and apoptosis, thereby playing a role in genome stability. Regulator of telomere length. The sequence is that of Telomere length regulation protein clk-2 (clk-2) from Caenorhabditis elegans.